A 691-amino-acid polypeptide reads, in one-letter code: DNA ligase (691 aa).

Residues 56-60 (DRAYD), 104-105 (SI), and Glu-139 each bind NAD(+). Lys-141 (N6-AMP-lysine intermediate) is an active-site residue. NAD(+)-binding residues include Arg-162, Glu-198, Lys-314, and Lys-338. Zn(2+)-binding residues include Cys-429, Cys-432, Cys-445, and Cys-451. The 85-residue stretch at 607–691 (TAGDALSGQT…SLLESHGIEI (85 aa)) folds into the BRCT domain.

This sequence belongs to the NAD-dependent DNA ligase family. LigA subfamily. It depends on Mg(2+) as a cofactor. Mn(2+) is required as a cofactor.

The enzyme catalyses NAD(+) + (deoxyribonucleotide)n-3'-hydroxyl + 5'-phospho-(deoxyribonucleotide)m = (deoxyribonucleotide)n+m + AMP + beta-nicotinamide D-nucleotide.. Its function is as follows. DNA ligase that catalyzes the formation of phosphodiester linkages between 5'-phosphoryl and 3'-hydroxyl groups in double-stranded DNA using NAD as a coenzyme and as the energy source for the reaction. It is essential for DNA replication and repair of damaged DNA. The protein is DNA ligase of Natronomonas pharaonis (strain ATCC 35678 / DSM 2160 / CIP 103997 / JCM 8858 / NBRC 14720 / NCIMB 2260 / Gabara) (Halobacterium pharaonis).